The following is a 199-amino-acid chain: Pyridoxine/pyridoxamine 5'-phosphate oxidase (199 aa).

FMN contacts are provided by residues 44-49 (RTVLLK), 59-60 (YT), Lys-66, and Gln-91. Position 49 (Lys-49) interacts with substrate. Residues Tyr-109, Arg-113, and Ser-117 each coordinate substrate. Residues 126-127 (QS) and Trp-171 contribute to the FMN site. Residue 177–179 (RLH) participates in substrate binding. Arg-181 contributes to the FMN binding site.

This sequence belongs to the pyridoxamine 5'-phosphate oxidase family. As to quaternary structure, homodimer. Requires FMN as cofactor.

It carries out the reaction pyridoxamine 5'-phosphate + O2 + H2O = pyridoxal 5'-phosphate + H2O2 + NH4(+). The catalysed reaction is pyridoxine 5'-phosphate + O2 = pyridoxal 5'-phosphate + H2O2. The protein operates within cofactor metabolism; pyridoxal 5'-phosphate salvage; pyridoxal 5'-phosphate from pyridoxamine 5'-phosphate: step 1/1. It functions in the pathway cofactor metabolism; pyridoxal 5'-phosphate salvage; pyridoxal 5'-phosphate from pyridoxine 5'-phosphate: step 1/1. Catalyzes the oxidation of either pyridoxine 5'-phosphate (PNP) or pyridoxamine 5'-phosphate (PMP) into pyridoxal 5'-phosphate (PLP). The protein is Pyridoxine/pyridoxamine 5'-phosphate oxidase of Xanthomonas campestris pv. campestris (strain 8004).